We begin with the raw amino-acid sequence, 214 residues long: Thymidylate kinase (214 aa).

10-17 lines the ATP pocket; the sequence is GIDGCGKT.

The protein belongs to the thymidylate kinase family.

It carries out the reaction dTMP + ATP = dTDP + ADP. In terms of biological role, phosphorylation of dTMP to form dTDP in both de novo and salvage pathways of dTTP synthesis. This is Thymidylate kinase from Prochlorococcus marinus subsp. pastoris (strain CCMP1986 / NIES-2087 / MED4).